The primary structure comprises 620 residues: Threonine--tRNA ligase (620 aa).

The interval 1–141 is editing domain; sequence MKMLLIHSDY…LSRKIVAKEE (141 aa). The segment at 197-496 is catalytic; that stretch reads PHVKFIKEKD…AEKGNAPMLP (300 aa). Residues cysteine 289, histidine 341, and histidine 465 each coordinate Zn(2+).

It belongs to the class-II aminoacyl-tRNA synthetase family. As to quaternary structure, homodimer. Requires Zn(2+) as cofactor.

It is found in the cytoplasm. It carries out the reaction tRNA(Thr) + L-threonine + ATP = L-threonyl-tRNA(Thr) + AMP + diphosphate + H(+). Its activity is regulated as follows. Not inhibited by 1 uM borrelidin (BN); probably does not bind BN. In terms of biological role, catalyzes the attachment of threonine to tRNA(Thr) in a two-step reaction: L-threonine is first activated by ATP to form Thr-AMP and then transferred to the acceptor end of tRNA(Thr). Also activates L-serine, but does not detectably transfer it to tRNA(Thr). Edits incorrectly charged L-seryl-tRNA(Thr) via its editing domain. Has no activity on correctly acylated L-seryl-tRNA(Ser) or L-threonyl-tRNA(Thr). Deacylates correctly charged glycyl-tRNA(Gly), but not glycyl-tRNA(Gly)(2'-dA76) (the terminal 2'-OH of tRNA adenine 76 has been dehydroxylated) nor the 2'-fluoro tRNA derivative, strongly suggesting the editing function is tRNA catalyzed. In Methanocaldococcus jannaschii (strain ATCC 43067 / DSM 2661 / JAL-1 / JCM 10045 / NBRC 100440) (Methanococcus jannaschii), this protein is Threonine--tRNA ligase.